Here is a 109-residue protein sequence, read N- to C-terminus: Putative antitoxin HigA3 (109 aa).

Residues 41–97 (LAEIRKALGHARQADVAALMGVSQARVSKLESGDLSHTELGTLQAYVAALGGHLRIV) form the HTH cro/C1-type domain. Residues 53–72 (QADVAALMGVSQARVSKLES) constitute a DNA-binding region (H-T-H motif).

In terms of biological role, putative antitoxin component of a type II toxin-antitoxin (TA) system. Its cognate toxin would be HigB3. The polypeptide is Putative antitoxin HigA3 (Mycobacterium tuberculosis (strain ATCC 25618 / H37Rv)).